A 113-amino-acid polypeptide reads, in one-letter code: Large ribosomal subunit protein bL17 (113 aa).

It belongs to the bacterial ribosomal protein bL17 family. In terms of assembly, part of the 50S ribosomal subunit. Contacts protein L32.

This chain is Large ribosomal subunit protein bL17, found in Alkaliphilus metalliredigens (strain QYMF).